The chain runs to 340 residues: MLNIQNYSASPHPGIVAERPQTPSASEHAEIAVVPSTTEHRGTDIISLSQAATKIQQAQQTLQSTPPISEENNDERTLARQQLTSSLNALAKSGVSLSAEQNENLRSTFSAPTSALFSASPMAQPRTTISDAEIWDMVSQNISAIGDSYLGVYENVVAVYTDFYQAFSDILSKMGGWLSPGKDGNTIKLNVDSLKSEISSLINKYTQINKNTILFPSQTGSGMTTATKAEAEQWIKELNLPDSCLKASGSGYVVLVDTGPLSKMVSDLNGIGSGSALELDNAKYQAWQSGFKAQEENLKTTLQTLTQKYSNANSLYDNLVKVLSSTISSSLETAKSFLQG.

Disordered regions lie at residues methionine 1–serine 26 and glutamine 57–arginine 76. Positions phenylalanine 291–leucine 319 form a coiled coil.

Belongs to the invasin protein D family.

The protein resides in the secreted. Functionally, required for translocation of effector proteins via the type III secretion system SPI-1, which is essential for an efficient bacterial internalization. Probably acts by modulating the secretion of SipA, SipB, and SipC. The sequence is that of Cell invasion protein SipD (sipD) from Salmonella typhi.